The primary structure comprises 130 residues: Larval cuticle protein 1 (130 aa).

The N-terminal stretch at 1–16 (MFKFVMICAVLGLAVA) is a signal peptide. In terms of domain architecture, Chitin-binding type R&amp;R spans 43 to 104 (ADGFDSSLHT…PSGAWIPTPP (62 aa)).

Component of the larval cuticle. The protein is Larval cuticle protein 1 (Lcp1) of Drosophila melanogaster (Fruit fly).